We begin with the raw amino-acid sequence, 1110 residues long: cGMP-specific 3',5'-cyclic phosphodiesterase (1110 aa).

Composition is skewed to low complexity over residues 1 to 25 (MTDV…SSAS) and 35 to 55 (TSTA…ASGA). 3 disordered regions span residues 1–55 (MTDV…ASGA), 67–128 (ISNQ…QQDV), and 184–203 (ASPT…SASS). Residues 88–103 (APYPPVPAAKPKPTPT) are compositionally biased toward pro residues. Low complexity predominate over residues 192 to 203 (SPRSLSNSSASS). GAF domains lie at 233–385 (DIDV…GIGI) and 417–601 (NLEC…GLGI). Residues 631–954 (SQDQTEKLTQ…RNWQDLAEKV (324 aa)) form the PDEase domain. His-707 (proton donor) is an active-site residue. The a divalent metal cation site is built by His-711, His-747, Asp-748, and Asp-858. Disordered stretches follow at residues 997 to 1028 (AQHG…TGAL) and 1040 to 1110 (LYNS…CSLL). 2 stretches are compositionally biased toward basic and acidic residues: residues 1006 to 1015 (DDSHTPEHQR) and 1056 to 1068 (LESH…DDKS). The span at 1082–1097 (GRMSASSSTSSAGTVV) shows a compositional bias: low complexity. Residues 1100–1110 (SKKRSKLCSLL) are compositionally biased toward basic residues. At Cys-1107 the chain carries Cysteine methyl ester. Cys-1107 carries the S-farnesyl cysteine lipid modification. The propeptide at 1108-1110 (SLL) is removed in mature form.

It belongs to the cyclic nucleotide phosphodiesterase family. As to quaternary structure, interacts with PrBP. It depends on a divalent metal cation as a cofactor.

It is found in the cell membrane. It carries out the reaction 3',5'-cyclic GMP + H2O = GMP + H(+). Functionally, has a role regulating cGMP transport in Malpighian tubule principal cells. This chain is cGMP-specific 3',5'-cyclic phosphodiesterase, found in Drosophila pseudoobscura pseudoobscura (Fruit fly).